Reading from the N-terminus, the 570-residue chain is Enhancer of polycomb-like protein 1 (570 aa).

The interval 541-570 (ALNNLNSGQTSGQTMGSNPGPGAIAPTPET) is disordered. The segment covering 543-557 (NNLNSGQTSGQTMGS) has biased composition (polar residues).

The protein belongs to the enhancer of polycomb family. Component of the NuA4 histone acetyltransferase complex.

The protein localises to the nucleus. In terms of biological role, component of the NuA4 histone acetyltransferase complex which is involved in transcriptional activation of selected genes principally by acetylation of nucleosomal histone H4 and H2A. The NuA4 complex is also involved in DNA repair. Involved in gene silencing by neighboring heterochromatin, blockage of the silencing spreading along the chromosome, and required for cell cycle progression through G2/M. This Emericella nidulans (strain FGSC A4 / ATCC 38163 / CBS 112.46 / NRRL 194 / M139) (Aspergillus nidulans) protein is Enhancer of polycomb-like protein 1 (epl1).